Consider the following 215-residue polypeptide: MRTGIIAQKIGMTSVFNDKGERISLTLVKVDDCQVVGHKTLEKHGYNALVIGIKDKKISRVTKPMKQVFANAKISPKTKLKEFRISEENFIDIAASLEVDYFTAGQFVDITATTIGKGFAGSMKRHNFRGLEASHGVSISHRSHGSTGQRQDPGKVFKGKKMAGHMGCNQVTIQNLKIFAVDKERKLIMIQGSIPGHKNSYLSVKDAIKKISITV.

The segment at 136-155 (GVSISHRSHGSTGQRQDPGK) is disordered. An N5-methylglutamine modification is found at Q151.

This sequence belongs to the universal ribosomal protein uL3 family. In terms of assembly, part of the 50S ribosomal subunit. Forms a cluster with proteins L14 and L19. Post-translationally, methylated by PrmB.

Its function is as follows. One of the primary rRNA binding proteins, it binds directly near the 3'-end of the 23S rRNA, where it nucleates assembly of the 50S subunit. The chain is Large ribosomal subunit protein uL3 from Rickettsia felis (strain ATCC VR-1525 / URRWXCal2) (Rickettsia azadi).